A 270-amino-acid chain; its full sequence is Phosphatidylglycerol--prolipoprotein diacylglyceryl transferase (270 aa).

The next 7 membrane-spanning stretches (helical) occupy residues valine 10–isoleucine 30, leucine 56–tyrosine 76, tryptophan 92–phenylalanine 112, phenylalanine 120–isoleucine 140, serine 175–alanine 195, methionine 202–valine 222, and valine 237–leucine 257. Arginine 139 contributes to the a 1,2-diacyl-sn-glycero-3-phospho-(1'-sn-glycerol) binding site.

Belongs to the Lgt family.

The protein localises to the cell inner membrane. The enzyme catalyses L-cysteinyl-[prolipoprotein] + a 1,2-diacyl-sn-glycero-3-phospho-(1'-sn-glycerol) = an S-1,2-diacyl-sn-glyceryl-L-cysteinyl-[prolipoprotein] + sn-glycerol 1-phosphate + H(+). The protein operates within protein modification; lipoprotein biosynthesis (diacylglyceryl transfer). Its function is as follows. Catalyzes the transfer of the diacylglyceryl group from phosphatidylglycerol to the sulfhydryl group of the N-terminal cysteine of a prolipoprotein, the first step in the formation of mature lipoproteins. The polypeptide is Phosphatidylglycerol--prolipoprotein diacylglyceryl transferase (Pseudomonas syringae pv. tomato (strain ATCC BAA-871 / DC3000)).